A 420-amino-acid polypeptide reads, in one-letter code: DNA primase small subunit (420 aa).

N-acetylmethionine is present on methionine 1. Residues glutamate 44, aspartate 109, and aspartate 111 contribute to the active site. Mg(2+)-binding residues include aspartate 109 and aspartate 111. Residues aspartate 109 and aspartate 111 each contribute to the Mn(2+) site. 109–111 (DID) is a binding site for a ribonucleoside 5'-triphosphate. Positions 121, 122, 128, and 131 each coordinate Zn(2+). The short motif at 121-131 (CCSSADICPKC) is the Zinc knuckle motif element. A ribonucleoside 5'-triphosphate is bound at residue 160–166 (SGRRGVH). Aspartate 306 serves as a coordination point for Mg(2+). Residue aspartate 306 coordinates Mn(2+). Residues 315 to 318 (HLLK) and histidine 324 contribute to the a ribonucleoside 5'-triphosphate site. The span at 363–373 (NEEEKEENEAE) shows a compositional bias: acidic residues. The segment at 363 to 382 (NEEEKEENEAESDVKHRTRD) is disordered.

This sequence belongs to the eukaryotic-type primase small subunit family. In terms of assembly, heterodimer of a catalytic subunit PRIM1 and a regulatory subunit PRIM2, also known as the DNA primase complex. Interacts with PRIM2 (via C-terminus). Component of the alpha DNA polymerase complex (also known as the alpha DNA polymerase-primase complex) consisting of four subunits: the catalytic subunit POLA1, the regulatory subunit POLA2, and the primase complex subunits PRIM1 and PRIM2 respectively. Within the complex, POLA1 directly interacts with PRIM2. Mg(2+) serves as cofactor. Mn(2+) is required as a cofactor.

It catalyses the reaction ssDNA + n NTP = ssDNA/pppN(pN)n-1 hybrid + (n-1) diphosphate.. Its activity is regulated as follows. The presence of the regulatory subunit PRIM2/p58 accelerates the kinetics of initiation and primer extension. Inhibited by arabinose nucleoside derivatives such as fludarabine and vidarabine. In terms of biological role, catalytic subunit of the DNA primase complex and component of the DNA polymerase alpha complex (also known as the alpha DNA polymerase-primase complex - primosome/replisome) which play an essential role in the initiation of DNA synthesis. During the S phase of the cell cycle, the DNA polymerase alpha complex (composed of a catalytic subunit POLA1, an accessory subunit POLA2 and two primase subunits, the catalytic subunit PRIM1 and the regulatory subunit PRIM2) is recruited to DNA at the replicative forks via direct interactions with MCM10 and WDHD1. The primase subunit of the polymerase alpha complex initiates DNA synthesis by oligomerising short RNA primers on both leading and lagging strands. These primers are initially extended by the polymerase alpha catalytic subunit and subsequently transferred to polymerase delta and polymerase epsilon for processive synthesis on the lagging and leading strand, respectively. In the primase complex, both subunits are necessary for the initial di-nucleotide formation, but the extension of the primer depends only on the catalytic subunit. Synthesizes 9-mer RNA primers (also known as the 'unit length' RNA primers). Incorporates only ribonucleotides in the presence of ribo- and deoxy-nucleotide triphosphates (rNTPs, dNTPs). Requires template thymine or cytidine to start the RNA primer synthesis, with an adenine or guanine at its 5'-end. Binds single stranded DNA. The protein is DNA primase small subunit (PRIM1) of Homo sapiens (Human).